A 79-amino-acid chain; its full sequence is Acyl carrier protein (79 aa).

In terms of domain architecture, Carrier spans 2–77; that stretch reads SEVADKVKKI…DAVEYIEKQK (76 aa). Residue serine 37 is modified to O-(pantetheine 4'-phosphoryl)serine.

The protein belongs to the acyl carrier protein (ACP) family. 4'-phosphopantetheine is transferred from CoA to a specific serine of apo-ACP by AcpS. This modification is essential for activity because fatty acids are bound in thioester linkage to the sulfhydryl of the prosthetic group.

The protein resides in the cytoplasm. It participates in lipid metabolism; fatty acid biosynthesis. In terms of biological role, carrier of the growing fatty acid chain in fatty acid biosynthesis. The protein is Acyl carrier protein of Granulibacter bethesdensis (strain ATCC BAA-1260 / CGDNIH1).